Reading from the N-terminus, the 329-residue chain is GMP reductase (329 aa).

The active-site Thioimidate intermediate is cysteine 178. Valine 207–valine 230 is an NADP(+) binding site.

Belongs to the IMPDH/GMPR family. GuaC type 2 subfamily.

It catalyses the reaction IMP + NH4(+) + NADP(+) = GMP + NADPH + 2 H(+). Its function is as follows. Catalyzes the irreversible NADPH-dependent deamination of GMP to IMP. It functions in the conversion of nucleobase, nucleoside and nucleotide derivatives of G to A nucleotides, and in maintaining the intracellular balance of A and G nucleotides. This chain is GMP reductase, found in Lactococcus lactis subsp. cremoris (strain MG1363).